The following is a 477-amino-acid chain: Glycogen synthase (477 aa).

An ADP-alpha-D-glucose-binding site is contributed by Lys-15.

Belongs to the glycosyltransferase 1 family. Bacterial/plant glycogen synthase subfamily.

It catalyses the reaction [(1-&gt;4)-alpha-D-glucosyl](n) + ADP-alpha-D-glucose = [(1-&gt;4)-alpha-D-glucosyl](n+1) + ADP + H(+). It participates in glycan biosynthesis; glycogen biosynthesis. In terms of biological role, synthesizes alpha-1,4-glucan chains using ADP-glucose. The polypeptide is Glycogen synthase (Streptococcus pneumoniae serotype 2 (strain D39 / NCTC 7466)).